The sequence spans 272 residues: MNNRVHQGHFARKRFGQNFLTDSYIIESIVESIYPQPGEAVIEIGPGLGALTEPVGERMDKMTVVEIDRDLAARLEVHPTLKDKLTIIQQDAMTIDFAQLAKERQQPLRVFGNLPYNISTPLMFHLFSFADAISDMTFMLQKEVVNRLVASHGSKTYGRLSVMAQYHCQVIPIIEVPPSSFKPAPKVDSAVVRLIPYKEKPYPVTDIAMLSRITSQAFNQRRKTLRNSLGGLLTAEDMLALDIDPTARAENISVEQYCKVANWLSSQQQHAE.

6 residues coordinate S-adenosyl-L-methionine: asparagine 18, leucine 20, glycine 45, glutamate 66, aspartate 91, and asparagine 113.

Belongs to the class I-like SAM-binding methyltransferase superfamily. rRNA adenine N(6)-methyltransferase family. RsmA subfamily.

Its subcellular location is the cytoplasm. It carries out the reaction adenosine(1518)/adenosine(1519) in 16S rRNA + 4 S-adenosyl-L-methionine = N(6)-dimethyladenosine(1518)/N(6)-dimethyladenosine(1519) in 16S rRNA + 4 S-adenosyl-L-homocysteine + 4 H(+). In terms of biological role, specifically dimethylates two adjacent adenosines (A1518 and A1519) in the loop of a conserved hairpin near the 3'-end of 16S rRNA in the 30S particle. May play a critical role in biogenesis of 30S subunits. This Proteus mirabilis (strain HI4320) protein is Ribosomal RNA small subunit methyltransferase A.